The primary structure comprises 245 residues: Ribonuclease 3 (245 aa).

The region spanning 18 to 146 is the RNase III domain; sequence LSEFLENLSI…FVGAIYLDSG (129 aa). Glu-59 contacts Mg(2+). Residue Asp-63 is part of the active site. Mg(2+) contacts are provided by Asp-132 and Glu-135. The active site involves Glu-135. Positions 173–242 constitute a DRBM domain; it reads DYKSLLQEYV…AEVALKAMED (70 aa).

The protein belongs to the ribonuclease III family. As to quaternary structure, homodimer. The cofactor is Mg(2+).

The protein localises to the cytoplasm. It catalyses the reaction Endonucleolytic cleavage to 5'-phosphomonoester.. In terms of biological role, digests double-stranded RNA. Involved in the processing of primary rRNA transcript to yield the immediate precursors to the large and small rRNAs (23S and 16S). Processes some mRNAs, and tRNAs when they are encoded in the rRNA operon. Processes pre-crRNA and tracrRNA of type II CRISPR loci if present in the organism. The sequence is that of Ribonuclease 3 from Borreliella afzelii (strain PKo) (Borrelia afzelii).